The sequence spans 75 residues: UPF0291 protein lmo1304 (75 aa).

The disordered stretch occupies residues 56–75; the sequence is DPNGKDVTPHKVKQLRKNKY. A compositionally biased stretch (basic residues) spans 65–75; that stretch reads HKVKQLRKNKY.

The protein belongs to the UPF0291 family.

Its subcellular location is the cytoplasm. The chain is UPF0291 protein lmo1304 from Listeria monocytogenes serovar 1/2a (strain ATCC BAA-679 / EGD-e).